Reading from the N-terminus, the 160-residue chain is Nucleotide-binding protein ASA_3207 (160 aa).

It belongs to the YajQ family.

Functionally, nucleotide-binding protein. This is Nucleotide-binding protein ASA_3207 from Aeromonas salmonicida (strain A449).